The primary structure comprises 95 residues: UPF0235 protein AnaeK_1146 (95 aa).

Belongs to the UPF0235 family.

The chain is UPF0235 protein AnaeK_1146 from Anaeromyxobacter sp. (strain K).